The sequence spans 171 residues: LIM domain transcription factor LMO4-A (171 aa).

The span at 1-19 shows a compositional bias: polar residues; sequence MVNNRSSESTTTAVSSNGS. The disordered stretch occupies residues 1–21; sequence MVNNRSSESTTTAVSSNGSPP. LIM zinc-binding domains lie at 22–84 and 86–148; these read KACA…LFGN and GACN…GLLN.

As to expression, at the start of gastrulation (stage 10), expressed in the mesodermal marginal zone. Shortly after (stage 11), expression is down-regulated in the dorsal most region. During neurulation, expressed in the neural plate and ventral epidermis. At late neurula stages, also expressed more rostrally, and then in the brain, migrating neural crests and ventral epidermis.

Its function is as follows. Acts as a positive cofactor of GATA transcription factors to establish the identity of the ventral mesoderm during gastrulation. Down-regulation in the dorsal mesoderm is necessary for the proper formation of this territory since, when present, lmo4 may bind ldb1 and restrict the availability of this cofactor for Spemman organizer transcription factors. At neurula stages, suppresses primary neuron differentiation and modulates gene expression at the Isthmic Organizer of the midbrain-hindbrain boundary. This is LIM domain transcription factor LMO4-A (lmo4-a) from Xenopus laevis (African clawed frog).